A 158-amino-acid polypeptide reads, in one-letter code: MLAMKLFTCFLQVLAGLAVHSQGALSAGNNSTEMEVVPFNEVWGRSYCRPMEKLVYIADEHPNEVSHIFSPSCVLLSRCSGCCGDEGLHCVALKTANITMQILKIPPNRDPHSYVEMTFSQDVLCECRPILETTKAERRKTKGKRKQSKTPQTEEPHL.

Residues M1–G23 constitute a signal peptide (or 26). N-linked (GlcNAc...) asparagine glycans are attached at residues N29 and N30. Intrachain disulfides connect C48–C90, C79–C125, and C83–C127. N-linked (GlcNAc...) asparagine glycosylation occurs at N97. Residues A136–L158 form a disordered region. A compositionally biased stretch (basic residues) spans E137–S148.

It belongs to the PDGF/VEGF growth factor family. In terms of assembly, antiparallel homodimer; disulfide-linked. Also found as heterodimer with VEGFA/VEGF.

It is found in the secreted. In terms of biological role, growth factor active in angiogenesis and endothelial cell growth, stimulating their proliferation and migration. It binds to the receptor FLT1/VEGFR-1. Also promotes cell tumor growth. This Rattus norvegicus (Rat) protein is Placenta growth factor (Pgf).